The primary structure comprises 41 residues: Large ribosomal subunit protein bL36 (41 aa).

This sequence belongs to the bacterial ribosomal protein bL36 family.

The polypeptide is Large ribosomal subunit protein bL36 (Beijerinckia indica subsp. indica (strain ATCC 9039 / DSM 1715 / NCIMB 8712)).